A 153-amino-acid polypeptide reads, in one-letter code: ATP synthase subunit b' (153 aa).

A helical transmembrane segment spans residues 20–40; sequence TLPLMAAQVVLLTFILNALFF.

This sequence belongs to the ATPase B chain family. As to quaternary structure, F-type ATPases have 2 components, F(1) - the catalytic core - and F(0) - the membrane proton channel. F(1) has five subunits: alpha(3), beta(3), gamma(1), delta(1), epsilon(1). F(0) has four main subunits: a(1), b(1), b'(1) and c(10-14). The alpha and beta chains form an alternating ring which encloses part of the gamma chain. F(1) is attached to F(0) by a central stalk formed by the gamma and epsilon chains, while a peripheral stalk is formed by the delta, b and b' chains.

It localises to the cellular thylakoid membrane. F(1)F(0) ATP synthase produces ATP from ADP in the presence of a proton or sodium gradient. F-type ATPases consist of two structural domains, F(1) containing the extramembraneous catalytic core and F(0) containing the membrane proton channel, linked together by a central stalk and a peripheral stalk. During catalysis, ATP synthesis in the catalytic domain of F(1) is coupled via a rotary mechanism of the central stalk subunits to proton translocation. Functionally, component of the F(0) channel, it forms part of the peripheral stalk, linking F(1) to F(0). The b'-subunit is a diverged and duplicated form of b found in plants and photosynthetic bacteria. The protein is ATP synthase subunit b' of Prochlorococcus marinus (strain SARG / CCMP1375 / SS120).